Here is a 231-residue protein sequence, read N- to C-terminus: Putative cobalt transport protein CbiM 1 (231 aa).

The next 6 helical transmembrane spans lie at 6–26, 41–61, 79–99, 107–127, 136–156, and 172–192; these read GFLP…FLIY, VLPL…VDIP, FFGP…QALL, TLGA…WLVF, VPLG…TYLI, and LTAF…ISII.

It belongs to the CbiM family. As to quaternary structure, forms an energy-coupling factor (ECF) transporter complex composed of an ATP-binding protein (A component, CbiO), a transmembrane protein (T component, CbiQ) and 2 possible substrate-capture proteins (S components, CbiM and CbiN) of unknown stoichimetry.

The protein resides in the cell membrane. The protein operates within cofactor biosynthesis; adenosylcobalamin biosynthesis. In terms of biological role, part of the energy-coupling factor (ECF) transporter complex CbiMNOQ involved in cobalt import. The polypeptide is Putative cobalt transport protein CbiM 1 (Methanocorpusculum labreanum (strain ATCC 43576 / DSM 4855 / Z)).